We begin with the raw amino-acid sequence, 117 residues long: Minor capsid protein VP2 (117 aa).

It belongs to the lagovirus VP2 protein family. Homooligomer. The portal-like structure consists in 12 copies of VP2. Interacts with capsid protein VP1.

The protein resides in the virion. It localises to the host cytoplasm. Its function is as follows. Minor structural protein that forms a portal-like structure at a unique three-fold axis of symmetry, following binding to the host receptor. The channel formed by VP2 may allow the delivery of the viral genome through the host endosomal membrane. The polypeptide is Minor capsid protein VP2 (Oryctolagus cuniculus (Rabbit)).